Reading from the N-terminus, the 460-residue chain is Proline--tRNA ligase (460 aa).

Belongs to the class-II aminoacyl-tRNA synthetase family. ProS type 3 subfamily. As to quaternary structure, homodimer.

The protein resides in the cytoplasm. The enzyme catalyses tRNA(Pro) + L-proline + ATP = L-prolyl-tRNA(Pro) + AMP + diphosphate. Functionally, catalyzes the attachment of proline to tRNA(Pro) in a two-step reaction: proline is first activated by ATP to form Pro-AMP and then transferred to the acceptor end of tRNA(Pro). The protein is Proline--tRNA ligase of Methanococcus maripaludis (strain DSM 14266 / JCM 13030 / NBRC 101832 / S2 / LL).